Here is a 138-residue protein sequence, read N- to C-terminus: Mitochondrial import inner membrane translocase subunit tim-16 (138 aa).

A compositionally biased stretch (low complexity) spans Thr-32–Thr-43. Disordered stretches follow at residues Thr-32–Ala-58 and Leu-118–Glu-138. Residues Gly-44–Ala-56 show a composition bias toward polar residues. The interval Glu-66–Ser-119 is J-like.

This sequence belongs to the TIM16/PAM16 family. In terms of assembly, probable component of the PAM complex at least composed of a mitochondrial HSP70 protein, GrpE, tim-44, tim-16 and tim-14. Associates with the TIM23 complex.

Its subcellular location is the mitochondrion inner membrane. In terms of biological role, regulates ATP-dependent protein translocation into the mitochondrial matrix. This chain is Mitochondrial import inner membrane translocase subunit tim-16, found in Caenorhabditis briggsae.